The chain runs to 494 residues: Alpha-amylase-related protein (494 aa).

The first 20 residues, 1–20 (MIKFALALTLCLAGASLSLA), serve as a signal peptide directing secretion. Q21 bears the Pyrrolidone carboxylic acid mark. C48 and C104 are disulfide-bonded. 3 residues coordinate Ca(2+): N118, Q169, and D178. A disulfide bridge connects residues C157 and C171. R206 serves as a coordination point for chloride. D208 (nucleophile) is an active-site residue. H212 lines the Ca(2+) pocket. E245 (proton donor) is an active-site residue. Chloride is bound by residues N308 and R343. Cystine bridges form between C376–C382, C418–C441, and C448–C460.

It belongs to the glycosyl hydrolase 13 family. In terms of assembly, monomer. The cofactor is Ca(2+). It depends on chloride as a cofactor.

It localises to the secreted. The catalysed reaction is Endohydrolysis of (1-&gt;4)-alpha-D-glucosidic linkages in polysaccharides containing three or more (1-&gt;4)-alpha-linked D-glucose units.. This is Alpha-amylase-related protein (Amyrel) from Drosophila kikkawai (Fruit fly).